A 442-amino-acid polypeptide reads, in one-letter code: Cytochrome c biogenesis CcmF C-terminal-like mitochondrial protein (442 aa).

3 helical membrane passes run asparagine 6 to leucine 26, proline 39 to leucine 59, and tyrosine 122 to alanine 142. The tract at residues arginine 151 to cysteine 175 is disordered. Residues glutamate 166–cysteine 175 are compositionally biased toward basic and acidic residues. The helical transmembrane segment at phenylalanine 411–leucine 431 threads the bilayer.

The protein belongs to the CcmF/CycK/Ccl1/NrfE/CcsA family. In terms of assembly, interacts with CCMFN2.

It is found in the mitochondrion inner membrane. Its function is as follows. Forms a complex with CCMFN1, CCMFN2 and CCMH that performs the assembly of heme with c-type apocytochromes in mitochondria. The sequence is that of Cytochrome c biogenesis CcmF C-terminal-like mitochondrial protein (CCMFC) from Arabidopsis thaliana (Mouse-ear cress).